The chain runs to 427 residues: Trigger factor (427 aa).

Residues 163–248 (GDTVVIDFVG…VHEVKSKEVP (86 aa)) form the PPIase FKBP-type domain.

The protein belongs to the FKBP-type PPIase family. Tig subfamily.

The protein resides in the cytoplasm. It carries out the reaction [protein]-peptidylproline (omega=180) = [protein]-peptidylproline (omega=0). Its function is as follows. Involved in protein export. Acts as a chaperone by maintaining the newly synthesized protein in an open conformation. Functions as a peptidyl-prolyl cis-trans isomerase. The sequence is that of Trigger factor from Streptococcus uberis (strain ATCC BAA-854 / 0140J).